A 157-amino-acid chain; its full sequence is LNQEKLSSTHFLLFPRAATLTWSDDTRYWSWNPVDFCGYQLEEAQLSRVSWFDCRWTVNTTDLKTNVWYNVFLKVQMGSGASGWNTPLNLELEMPNGSKQASQVVLNDRPRDVWFKLQMGNLMVSDSETCGALRMSLYNHQTNWKMGATLGPLALEA.

A disulfide bridge links Cys-37 with Cys-54.

Homodimer. As to expression, detected in fruits (at protein level).

The protein localises to the secreted. Functionally, binds with high affinity specifically to chito-oligosaccharides. May play a role in plant defense against pathogens by directly binding with the chitin cell wall. Forms filamentous structures at higher concentrations and may promote wound healing by forming filaments with phloem proteins like PP1. This chain is Lectin, found in Coccinia grandis (Ivy gourd).